The sequence spans 240 residues: Phosphatidylserine decarboxylase proenzyme (240 aa).

S209 acts as the Schiff-base intermediate with substrate; via pyruvic acid in catalysis. S209 is modified (pyruvic acid (Ser); by autocatalysis).

The protein belongs to the phosphatidylserine decarboxylase family. PSD-A subfamily. Heterodimer of a large membrane-associated beta subunit and a small pyruvoyl-containing alpha subunit. It depends on pyruvate as a cofactor. Is synthesized initially as an inactive proenzyme. Formation of the active enzyme involves a self-maturation process in which the active site pyruvoyl group is generated from an internal serine residue via an autocatalytic post-translational modification. Two non-identical subunits are generated from the proenzyme in this reaction, and the pyruvate is formed at the N-terminus of the alpha chain, which is derived from the carboxyl end of the proenzyme. The post-translation cleavage follows an unusual pathway, termed non-hydrolytic serinolysis, in which the side chain hydroxyl group of the serine supplies its oxygen atom to form the C-terminus of the beta chain, while the remainder of the serine residue undergoes an oxidative deamination to produce ammonia and the pyruvoyl prosthetic group on the alpha chain.

It localises to the cell membrane. The enzyme catalyses a 1,2-diacyl-sn-glycero-3-phospho-L-serine + H(+) = a 1,2-diacyl-sn-glycero-3-phosphoethanolamine + CO2. Its pathway is phospholipid metabolism; phosphatidylethanolamine biosynthesis; phosphatidylethanolamine from CDP-diacylglycerol: step 2/2. Functionally, catalyzes the formation of phosphatidylethanolamine (PtdEtn) from phosphatidylserine (PtdSer). This chain is Phosphatidylserine decarboxylase proenzyme, found in Mycobacterium marinum (strain ATCC BAA-535 / M).